We begin with the raw amino-acid sequence, 86 residues long: Small ribosomal subunit protein bS20 (86 aa).

Positions 1-16 (MANIKSQEKRIRTNER) are enriched in basic and acidic residues. The disordered stretch occupies residues 1 to 25 (MANIKSQEKRIRTNERRRLRNQSVK).

Belongs to the bacterial ribosomal protein bS20 family.

Binds directly to 16S ribosomal RNA. The chain is Small ribosomal subunit protein bS20 from Mycobacterium sp. (strain JLS).